The following is a 526-amino-acid chain: Cytochrome P450 4F5 (526 aa).

Cysteine 470 provides a ligand contact to heme.

Belongs to the cytochrome P450 family. The cofactor is heme. In terms of tissue distribution, high expression in liver and kidney. Lower expression in brain.

Its subcellular location is the endoplasmic reticulum membrane. The protein resides in the microsome membrane. The catalysed reaction is an organic molecule + reduced [NADPH--hemoprotein reductase] + O2 = an alcohol + oxidized [NADPH--hemoprotein reductase] + H2O + H(+). The protein is Cytochrome P450 4F5 (Cyp4f5) of Rattus norvegicus (Rat).